Reading from the N-terminus, the 171-residue chain is Regulator of ribonuclease activity A (171 aa).

It belongs to the RraA family. In terms of assembly, homotrimer. Binds to both RNA-binding sites in the C-terminal region of Rne and to RhlB.

It is found in the cytoplasm. In terms of biological role, globally modulates RNA abundance by binding to RNase E (Rne) and regulating its endonucleolytic activity. Can modulate Rne action in a substrate-dependent manner by altering the composition of the degradosome. Modulates RNA-binding and helicase activities of the degradosome. The chain is Regulator of ribonuclease activity A from Vibrio cholerae serotype O1 (strain ATCC 39315 / El Tor Inaba N16961).